Reading from the N-terminus, the 475-residue chain is GTPase Der (475 aa).

EngA-type G domains lie at 2 to 166 (LRIA…NIPE) and 213 to 386 (LKIA…ETVS). Residues 8–15 (GRPNVGKS), 55–59 (DTGGV), 118–121 (NKAD), 219–226 (GRPNVGKS), 266–270 (DTAGL), and 331–334 (NKWD) each bind GTP. The 85-residue stretch at 387–471 (RKVPTPVVNK…PFDLEIKEKA (85 aa)) folds into the KH-like domain.

Belongs to the TRAFAC class TrmE-Era-EngA-EngB-Septin-like GTPase superfamily. EngA (Der) GTPase family. Associates with the 50S ribosomal subunit.

In terms of biological role, GTPase that plays an essential role in the late steps of ribosome biogenesis. This Chlamydia felis (strain Fe/C-56) (Chlamydophila felis) protein is GTPase Der.